The sequence spans 643 residues: MGSGDTRGESSLVAKPIEIILNKLPHAILAQQQFQKYITSPIYRYLSKLLLFREVAWPESTKDTQKGQVGIFSFQNNYADSATTFRILAHLDEQRYPLPNGAAEKNLPSLFEGFKATVSIIQQRLLLDNVDGATNSDKEKYVQLPDINTGFVNKTYSRIDLTHLLEDVETNVENLSINKTLEMDELTRLDSMINELESRKLKILERVKHIDSKSTNLENDVTLIKDRINFIEEYNLEADREQSLRKQMEEERSSEASSFTQNEEAISSLCDVESKDTRLKDFYKMPHEKSHDKNRQIISETYSRNTTAFRMTIPHGEHGNSITALDFDTPWGTLCSSSYQDRIVKVWDLNHGIQVGELPGHLATVNCMQIDKKNYNMLITGSKDATLKLWDLNLSREIYLDHSPLKEKTEEIVTPCIHNFELHKDEITALSFDSEALVSGSRDKKIFHWDLTTGKCIQQLDLIFTPTHSDIKMPARSLNNGACLLGTEAPMIGALQCYNSALATGTKDGIVRLWDLRVGKPVRLLEGHTDGITSLKFDSEKLVTGSMDNSVRIWDLRTSSILDVIAYDLPVSSLDFDGKLITVGANEGGVNVFNMERDEHWMTPEPPHSLDGDELSRRIAIVKYKDGFLINGHNDGDINVWTL.

A required for interaction with FIS1 and MDV1 region spans residues 1–274; it reads MGSGDTRGES…AISSLCDVES (274 aa). Residues 74 to 126 form a sufficient for interaction with FIS1 region; it reads FQNNYADSATTFRILAHLDEQRYPLPNGAAEKNLPSLFEGFKATVSIIQQRLL. A coiled-coil region spans residues 160-255; it reads DLTHLLEDVE…KQMEEERSSE (96 aa). Residues 243–254 show a composition bias toward basic and acidic residues; sequence SLRKQMEEERSS. A disordered region spans residues 243-262; it reads SLRKQMEEERSSEASSFTQN. WD repeat units follow at residues 317–357, 360–400, 422–461, 479–526, 527–566, 568–603, and 614–643; these read EHGN…QVGE, GHLA…EIYL, LHKDEITALSFDSEALVSGSRDKKIFHWDLTTGKCIQQLD, NNGA…RLLE, GHTDGITSLKFDSEKLVTGSMDNSVRIWDLRTSSILDVIA, DLPVSSLDFDGKLITVGANEGGVNVFNMERDEHWMT, and ELSRRIAIVKYKDGFLINGHNDGDINVWTL.

Belongs to the WD repeat MDV1/CAF4 family. Interacts with DNM1, FIS1 and MDV1, components of the mitochondrial fission machinery. Interacts via its WD repeats with DNM1. Interacts with CCR4 and NOT1, components of the CCR4-NOT complex. It is however not a component of the 1.0 MDa CCR4-NOT core complex, but appears to be part of a less characterized, 1.9 MDa CCR4-NOT complex. Interacts with DBF2, another likely component of the 1.9 MDa complex. Interacts with SRB9 and SRB10, components of the SRB8-11 complex.

Its subcellular location is the mitochondrion outer membrane. Involved in mitochondrial fission. Has a partially redundant function to MDV1 in acting as an adapter protein, binding to FIS1 on the mitochondrial outer membrane and recruiting the dynamin-like GTPase DNM1 to form mitochondrial fission complexes. Plays a key role in determining the polarized localization of those DNM1 clusters that are not immediately involved in the mitochondrial fission process. This is CCR4-associated factor 4 (CAF4) from Saccharomyces cerevisiae (strain ATCC 204508 / S288c) (Baker's yeast).